Consider the following 674-residue polypeptide: Acetyl-coenzyme A synthetase (674 aa).

Residues 201 to 204 and T320 contribute to the CoA site; that span reads RGGR. ATP contacts are provided by residues 396 to 398, 420 to 425, D518, and R533; these read GEP and DTYWQT. Position 541 (S541) interacts with CoA. R544 lines the ATP pocket. R603 contributes to the CoA binding site.

The protein belongs to the ATP-dependent AMP-binding enzyme family.

The catalysed reaction is acetate + ATP + CoA = acetyl-CoA + AMP + diphosphate. The chain is Acetyl-coenzyme A synthetase (acsA) from Dictyostelium discoideum (Social amoeba).